The primary structure comprises 271 residues: Formamidopyrimidine-DNA glycosylase (271 aa).

Residue Pro2 is the Schiff-base intermediate with DNA of the active site. Glu3 serves as the catalytic Proton donor. The Proton donor; for beta-elimination activity role is filled by Lys57. 3 residues coordinate DNA: His90, Arg109, and Lys150. The FPG-type zinc-finger motif lies at 235–269 (LVYGNKDKPCPKCGGKIESLIIGQRNSFFCPKCQK). The active-site Proton donor; for delta-elimination activity is the Arg259.

The protein belongs to the FPG family. In terms of assembly, monomer. The cofactor is Zn(2+).

It carries out the reaction Hydrolysis of DNA containing ring-opened 7-methylguanine residues, releasing 2,6-diamino-4-hydroxy-5-(N-methyl)formamidopyrimidine.. The enzyme catalyses 2'-deoxyribonucleotide-(2'-deoxyribose 5'-phosphate)-2'-deoxyribonucleotide-DNA = a 3'-end 2'-deoxyribonucleotide-(2,3-dehydro-2,3-deoxyribose 5'-phosphate)-DNA + a 5'-end 5'-phospho-2'-deoxyribonucleoside-DNA + H(+). Involved in base excision repair of DNA damaged by oxidation or by mutagenic agents. Acts as a DNA glycosylase that recognizes and removes damaged bases. Has a preference for oxidized purines, such as 7,8-dihydro-8-oxoguanine (8-oxoG). Has AP (apurinic/apyrimidinic) lyase activity and introduces nicks in the DNA strand. Cleaves the DNA backbone by beta-delta elimination to generate a single-strand break at the site of the removed base with both 3'- and 5'-phosphates. The chain is Formamidopyrimidine-DNA glycosylase from Haemophilus influenzae (strain 86-028NP).